Reading from the N-terminus, the 2603-residue chain is Ankyrin repeat domain-containing protein 17 (2603 aa).

M1 bears the N-acetylmethionine mark. Low complexity-rich tracts occupy residues M1 to E34 and S42 to G53. Positions M1–E143 are disordered. 2 positions are modified to phosphoserine: S19 and S50. Over residues K63–T79 the composition is skewed to basic residues. Low complexity predominate over residues S84–N94. Positions S95–T111 are enriched in gly residues. The segment covering S116–E131 has biased composition (acidic residues). S156 carries the phosphoserine modification. ANK repeat units lie at residues S233–E262, E266–D295, G300–A329, T333–D362, N366–T395, F400–H429, E433–M462, S466–E495, E499–A528, T533–L562, G563–A592, T596–H625, G629–R658, N663–H692, and D696–S725. K318 is covalently cross-linked (Glycyl lysine isopeptide (Lys-Gly) (interchain with G-Cter in SUMO2)). Position 803 is a phosphoserine (S803). ANK repeat units follow at residues N1082 to H1111, K1115 to A1144, T1149 to H1178, S1182 to S1211, L1217 to A1246, N1251 to H1280, T1284 to A1313, S1319 to V1348, K1352 to A1381, and R1385 to S1414. A coiled-coil region spans residues V1442–E1526. S1457 carries the phosphoserine modification. Disordered regions lie at residues A1479 to E1500 and E1517 to E1717. The segment covering R1481–K1491 has biased composition (basic residues). Composition is skewed to low complexity over residues T1531–T1550, E1602–S1611, and S1620–S1632. S1635 and S1639 each carry phosphoserine. Polar residues-rich tracts occupy residues V1642–Q1652 and L1675–G1703. 3 positions are modified to phosphoserine: S1696, S1700, and S1709. A KH domain is found at R1725–I1789. R1874 is modified (asymmetric dimethylarginine). Disordered regions lie at residues P1906 to R1995, T2011 to S2192, and V2273 to V2332. Composition is skewed to low complexity over residues S1950–R1995 and T2011–T2028. A phosphoserine mark is found at S2042, S2044, S2045, S2047, S2059, and S2067. Polar residues predominate over residues A2066–E2078. Residues S2095–S2106 show a composition bias toward low complexity. Composition is skewed to polar residues over residues N2107–Q2127 and V2273–S2303. The span at F2308–S2318 shows a compositional bias: pro residues. Phosphoserine occurs at positions 2373 and 2401. The tract at residues C2381–V2423 is disordered. Positions S2382–S2411 are enriched in low complexity.

In terms of assembly, interacts (via N-terminus) with NOD2. Interacts with CDK2, MCM3, MCM5, MCM7, CDC6 and PCNA. Interacts with MAVS and IFIH1. Interacts (via the second ankyrin repeat cluster) with DDX58. (Microbial infection) Interacts with enterovirus 71/EV71 capsid protein VP1. Phosphorylated by CDK2. Ubiquitously expressed.

Its subcellular location is the cytoplasm. The protein localises to the nucleus. In terms of biological role, could play pivotal roles in cell cycle and DNA regulation. Involved in innate immune defense against viruse by positively regulating the viral dsRNA receptors DDX58 and IFIH1 signaling pathways. Involves in NOD2- and NOD1-mediated responses to bacteria suggesting a role in innate antibacterial immune pathways too. Target of enterovirus 71 which is the major etiological agent of HFMD (hand, foot and mouth disease). Could play a central role for the formation and/or maintenance of the blood vessels of the circulation system. The protein is Ankyrin repeat domain-containing protein 17 (ANKRD17) of Homo sapiens (Human).